The following is a 266-amino-acid chain: Phosphatidylglycerol--prolipoprotein diacylglyceryl transferase (266 aa).

7 helical membrane passes run 19-39, 61-81, 91-111, 125-145, 176-196, 204-224, and 237-257; these read IWGP…FAFA, LMFW…TLFY, LYLF…LGVI, FLQV…FGRI, PSQL…ILWF, GAVS…VEFF, and GMSM…ILMV. A 1,2-diacyl-sn-glycero-3-phospho-(1'-sn-glycerol) is bound at residue R144.

It belongs to the Lgt family.

The protein resides in the cell inner membrane. The catalysed reaction is L-cysteinyl-[prolipoprotein] + a 1,2-diacyl-sn-glycero-3-phospho-(1'-sn-glycerol) = an S-1,2-diacyl-sn-glyceryl-L-cysteinyl-[prolipoprotein] + sn-glycerol 1-phosphate + H(+). Its pathway is protein modification; lipoprotein biosynthesis (diacylglyceryl transfer). In terms of biological role, catalyzes the transfer of the diacylglyceryl group from phosphatidylglycerol to the sulfhydryl group of the N-terminal cysteine of a prolipoprotein, the first step in the formation of mature lipoproteins. This chain is Phosphatidylglycerol--prolipoprotein diacylglyceryl transferase, found in Idiomarina loihiensis (strain ATCC BAA-735 / DSM 15497 / L2-TR).